The primary structure comprises 280 residues: UPF0758 protein Atu1607 (280 aa).

The tract at residues 1 to 22 (MAKRPALPSADLSPTSGFEAGE) is disordered. Residues 158–280 (VLGSWSSVID…HASFKGLRLI (123 aa)) form the MPN domain. Zn(2+)-binding residues include His-229, His-231, and Asp-242. A JAMM motif motif is present at residues 229-242 (HNHPSGDPTPSRAD).

This sequence belongs to the UPF0758 family.

This chain is UPF0758 protein Atu1607, found in Agrobacterium fabrum (strain C58 / ATCC 33970) (Agrobacterium tumefaciens (strain C58)).